The chain runs to 626 residues: DNA-directed RNA polymerase subunit beta C-terminal section (626 aa).

A disordered region spans residues 287–307 (NTKSKNTGKGSKPPRASKAQN).

Belongs to the RNA polymerase beta chain family. In terms of assembly, in plastids the minimal PEP RNA polymerase catalytic core is composed of four subunits: alpha, beta, beta', and beta''. When a (nuclear-encoded) sigma factor is associated with the core the holoenzyme is formed, which can initiate transcription.

The protein localises to the plastid. It is found in the chloroplast. It carries out the reaction RNA(n) + a ribonucleoside 5'-triphosphate = RNA(n+1) + diphosphate. Its function is as follows. DNA-dependent RNA polymerase catalyzes the transcription of DNA into RNA using the four ribonucleoside triphosphates as substrates. This Chlamydomonas reinhardtii (Chlamydomonas smithii) protein is DNA-directed RNA polymerase subunit beta C-terminal section (rpoB2).